A 469-amino-acid chain; its full sequence is A-type ATP synthase subunit B (469 aa).

The protein belongs to the ATPase alpha/beta chains family. In terms of assembly, has multiple subunits with at least A(3), B(3), C, D, E, F, H, I and proteolipid K(x).

It localises to the cell membrane. Its function is as follows. Component of the A-type ATP synthase that produces ATP from ADP in the presence of a proton gradient across the membrane. The B chain is a regulatory subunit. The chain is A-type ATP synthase subunit B from Staphylothermus marinus (strain ATCC 43588 / DSM 3639 / JCM 9404 / F1).